An 884-amino-acid polypeptide reads, in one-letter code: Alanine--tRNA ligase (884 aa).

Residues H562, H566, C674, and H678 each contribute to the Zn(2+) site.

It belongs to the class-II aminoacyl-tRNA synthetase family. Zn(2+) serves as cofactor.

It localises to the cytoplasm. The catalysed reaction is tRNA(Ala) + L-alanine + ATP = L-alanyl-tRNA(Ala) + AMP + diphosphate. In terms of biological role, catalyzes the attachment of alanine to tRNA(Ala) in a two-step reaction: alanine is first activated by ATP to form Ala-AMP and then transferred to the acceptor end of tRNA(Ala). Also edits incorrectly charged Ser-tRNA(Ala) and Gly-tRNA(Ala) via its editing domain. The sequence is that of Alanine--tRNA ligase from Rhizobium etli (strain ATCC 51251 / DSM 11541 / JCM 21823 / NBRC 15573 / CFN 42).